Consider the following 353-residue polypeptide: UPF0283 membrane protein CKO_01392 (353 aa).

Helical transmembrane passes span 70–90 (MVMG…VQWT), 99–119 (WVAL…VGSV), and 213–233 (ESTL…FIAW).

Belongs to the UPF0283 family.

It localises to the cell inner membrane. The chain is UPF0283 membrane protein CKO_01392 from Citrobacter koseri (strain ATCC BAA-895 / CDC 4225-83 / SGSC4696).